Here is a 353-residue protein sequence, read N- to C-terminus: Ribosome biogenesis protein BRX1 homolog (353 aa).

Residues 1-50 (MAATKRKRRGGLEVQAKKPKRSSKDAGQPAKQADVAKEAEEENRDRIPGP) are disordered. Over residues 34 to 47 (DVAKEAEEENRDRI) the composition is skewed to basic and acidic residues. The 190-residue stretch at 60-249 (ERILIFSSRG…LIKIFQGSFG (190 aa)) folds into the Brix domain. A Glycyl lysine isopeptide (Lys-Gly) (interchain with G-Cter in SUMO2) cross-link involves residue lysine 160. Residue serine 261 is modified to Phosphoserine. The residue at position 276 (lysine 276) is an N6-acetyllysine. Glycyl lysine isopeptide (Lys-Gly) (interchain with G-Cter in SUMO2) cross-links involve residues lysine 314 and lysine 322. Basic residues predominate over residues 334 to 344 (RRIYKRHRKLQ). Residues 334–353 (RRIYKRHRKLQQKMSRGSAK) form a disordered region.

This sequence belongs to the BRX1 family.

The protein localises to the nucleus. Its subcellular location is the nucleolus. In terms of biological role, required for biogenesis of the 60S ribosomal subunit. The chain is Ribosome biogenesis protein BRX1 homolog (Brix1) from Mus musculus (Mouse).